The chain runs to 115 residues: Rubredoxin (115 aa).

The 52-residue stretch at Ser15–Thr66 folds into the Rubredoxin-like domain. Cys20, Cys23, Cys53, and Cys56 together coordinate Fe cation.

This sequence belongs to the rubredoxin family. It depends on Fe(3+) as a cofactor.

In terms of biological role, rubredoxin is a small nonheme, iron protein lacking acid-labile sulfide. Its single Fe, chelated to 4 Cys, functions as an electron acceptor and may also stabilize the conformation of the molecule. Could be involved in hydrogenase-linked redox processes. This is Rubredoxin (rub) from Synechocystis sp. (strain ATCC 27184 / PCC 6803 / Kazusa).